We begin with the raw amino-acid sequence, 158 residues long: Small ribosomal subunit protein uS9 (158 aa).

This sequence belongs to the universal ribosomal protein uS9 family.

This Nitrobacter hamburgensis (strain DSM 10229 / NCIMB 13809 / X14) protein is Small ribosomal subunit protein uS9.